We begin with the raw amino-acid sequence, 51 residues long: Large ribosomal subunit protein bL33 (51 aa).

This sequence belongs to the bacterial ribosomal protein bL33 family.

This Pseudoalteromonas atlantica (strain T6c / ATCC BAA-1087) protein is Large ribosomal subunit protein bL33.